Reading from the N-terminus, the 145-residue chain is MIALIQRVSRASVVVDNQTIGAIDKGLLVLLGVEREDNREKMEKLATKVMSYRVFSDENGKMNLNLTQAGGSLLVVSQFTLAADTERGLRPSFSGAGTPEQALGLYEEFVAFCRTKGVNTETGQFAADMKVELVNDGPVTFHLQV.

The Gly-cisPro motif, important for rejection of L-amino acids signature appears at 137–138; the sequence is GP.

Belongs to the DTD family. As to quaternary structure, homodimer.

The protein resides in the cytoplasm. It catalyses the reaction glycyl-tRNA(Ala) + H2O = tRNA(Ala) + glycine + H(+). It carries out the reaction a D-aminoacyl-tRNA + H2O = a tRNA + a D-alpha-amino acid + H(+). An aminoacyl-tRNA editing enzyme that deacylates mischarged D-aminoacyl-tRNAs. Also deacylates mischarged glycyl-tRNA(Ala), protecting cells against glycine mischarging by AlaRS. Acts via tRNA-based rather than protein-based catalysis; rejects L-amino acids rather than detecting D-amino acids in the active site. By recycling D-aminoacyl-tRNA to D-amino acids and free tRNA molecules, this enzyme counteracts the toxicity associated with the formation of D-aminoacyl-tRNA entities in vivo and helps enforce protein L-homochirality. This Shewanella oneidensis (strain ATCC 700550 / JCM 31522 / CIP 106686 / LMG 19005 / NCIMB 14063 / MR-1) protein is D-aminoacyl-tRNA deacylase.